The following is a 565-amino-acid chain: MKATQTLIATTKELPKEAVLISHQYMLKAGLIKKLASGIYTWMPLGLKVLQKIQNIVRDEMNKAGASELLLPSILPSELLQETHRWDKFGPELLKLHDRHNRDFCYGPTHEEPIVDMARDTIKSYKQLPLNLYQIQTKFRDEIRPRFGVMRAREFIMKDAYSFHENSQCLRNTYNTMYATYCNILDKIGLAYRPVKADTGAIGGDNSHEFQVLANAGEDIICYSNGSDYAANIELATYAKSDLSKRVNSQNTIEKIHTPNIKTIEKLCKEMSFDIKKTIKTMVIKDAGGNFFALVIRGDHELNETKINKLDQIIAPYTLATKEEIFSIFNANPGSLGIYNCPISIIADYSAIAITDLVCGANEDDYHFTNVNWDRDVTNYQIADIRNVVTGDISPDGKGTLELTNGIEVGHIFELEDVYSKPMNANIIGQDGKSKPMLMGCYGFGVSRVMAAAIEQSHDENGIIWPESIAPYQVAILPINYNKSDKIKEVADKLYQDLLGDGIDVLLDDRGARPGVMFADADLIGYSHHVVIGDRLLEQGLIEYKNRKTQEKQEITIAELIKILK.

This sequence belongs to the class-II aminoacyl-tRNA synthetase family. ProS type 1 subfamily. Homodimer.

The protein resides in the cytoplasm. It carries out the reaction tRNA(Pro) + L-proline + ATP = L-prolyl-tRNA(Pro) + AMP + diphosphate. Catalyzes the attachment of proline to tRNA(Pro) in a two-step reaction: proline is first activated by ATP to form Pro-AMP and then transferred to the acceptor end of tRNA(Pro). As ProRS can inadvertently accommodate and process non-cognate amino acids such as alanine and cysteine, to avoid such errors it has two additional distinct editing activities against alanine. One activity is designated as 'pretransfer' editing and involves the tRNA(Pro)-independent hydrolysis of activated Ala-AMP. The other activity is designated 'posttransfer' editing and involves deacylation of mischarged Ala-tRNA(Pro). The misacylated Cys-tRNA(Pro) is not edited by ProRS. This Francisella tularensis subsp. tularensis (strain FSC 198) protein is Proline--tRNA ligase.